A 316-amino-acid chain; its full sequence is L-lactate dehydrogenase 3 (316 aa).

Residues Val16, Asp37, Arg42, and Tyr68 each contribute to the NAD(+) site. Position 91 (Arg91) interacts with substrate. Residues Ser104, 121-123 (ASN), and Thr146 contribute to the NAD(+) site. Position 123–126 (123–126 (NPVD)) interacts with substrate. Residue 151-154 (DSSR) coordinates substrate. Beta-D-fructose 1,6-bisphosphate-binding residues include Arg156 and His171. His178 (proton acceptor) is an active-site residue. A substrate-binding site is contributed by Thr233.

This sequence belongs to the LDH/MDH superfamily. LDH family. Homotetramer.

The protein resides in the cytoplasm. It carries out the reaction (S)-lactate + NAD(+) = pyruvate + NADH + H(+). It functions in the pathway fermentation; pyruvate fermentation to lactate; (S)-lactate from pyruvate: step 1/1. With respect to regulation, allosterically activated by fructose 1,6-bisphosphate (FBP). Its function is as follows. Catalyzes the conversion of lactate to pyruvate. The polypeptide is L-lactate dehydrogenase 3 (Bacillus cereus (strain ATCC 14579 / DSM 31 / CCUG 7414 / JCM 2152 / NBRC 15305 / NCIMB 9373 / NCTC 2599 / NRRL B-3711)).